Reading from the N-terminus, the 378-residue chain is Pseudouridine kinase (378 aa).

Pseudouridine-binding positions include Asp-12, Thr-26, 37-41, Val-38, Asn-137, and Lys-166; that span reads GVARN. Residues Ser-181 and Thr-237 each contribute to the Mg(2+) site. Residues Thr-237, Gly-239, Gly-242, Thr-298, Leu-306, and Gly-310 each coordinate ATP. Asp-311 is a pseudouridine binding site.

This sequence belongs to the carbohydrate kinase PfkB family. As to quaternary structure, forms homodimers.

It is found in the peroxisome. It carries out the reaction pseudouridine + ATP = psi-UMP + ADP + H(+). Functionally, catalyzes the phosphorylation of pseudouridine to pseudouridine 5'-phosphate (PsiMP). Catalyzes the first step in a pseudouridine degradation pathway. Acts together with the pseudouridine 5'-phosphate glycosidase PUMY in the peroxisome to prevent toxic pseudouridine monophosphate accumulation. The protein is Pseudouridine kinase of Arabidopsis thaliana (Mouse-ear cress).